Reading from the N-terminus, the 262-residue chain is Pyridoxine 5'-phosphate synthase (262 aa).

Asparagine 6 contributes to the 3-amino-2-oxopropyl phosphate binding site. Aspartate 8–histidine 9 serves as a coordination point for 1-deoxy-D-xylulose 5-phosphate. Residue arginine 17 coordinates 3-amino-2-oxopropyl phosphate. The active-site Proton acceptor is histidine 41. Arginine 43 and histidine 48 together coordinate 1-deoxy-D-xylulose 5-phosphate. Catalysis depends on glutamate 68, which acts as the Proton acceptor. Threonine 98 contacts 1-deoxy-D-xylulose 5-phosphate. The active-site Proton donor is histidine 210. 3-amino-2-oxopropyl phosphate is bound by residues glycine 211 and glycine 232–glutamine 233.

This sequence belongs to the PNP synthase family. In terms of assembly, homooctamer; tetramer of dimers.

It is found in the cytoplasm. It carries out the reaction 3-amino-2-oxopropyl phosphate + 1-deoxy-D-xylulose 5-phosphate = pyridoxine 5'-phosphate + phosphate + 2 H2O + H(+). The protein operates within cofactor biosynthesis; pyridoxine 5'-phosphate biosynthesis; pyridoxine 5'-phosphate from D-erythrose 4-phosphate: step 5/5. Functionally, catalyzes the complicated ring closure reaction between the two acyclic compounds 1-deoxy-D-xylulose-5-phosphate (DXP) and 3-amino-2-oxopropyl phosphate (1-amino-acetone-3-phosphate or AAP) to form pyridoxine 5'-phosphate (PNP) and inorganic phosphate. This is Pyridoxine 5'-phosphate synthase from Campylobacter jejuni subsp. jejuni serotype O:23/36 (strain 81-176).